A 354-amino-acid chain; its full sequence is Chorismate synthase (354 aa).

NADP(+) is bound by residues Arg-48 and Arg-54. Residues 125 to 127, 238 to 239, Gly-278, 293 to 297, and Arg-319 contribute to the FMN site; these read RSS, NA, and KPTSS.

It belongs to the chorismate synthase family. As to quaternary structure, homotetramer. FMNH2 serves as cofactor.

It carries out the reaction 5-O-(1-carboxyvinyl)-3-phosphoshikimate = chorismate + phosphate. The protein operates within metabolic intermediate biosynthesis; chorismate biosynthesis; chorismate from D-erythrose 4-phosphate and phosphoenolpyruvate: step 7/7. Catalyzes the anti-1,4-elimination of the C-3 phosphate and the C-6 proR hydrogen from 5-enolpyruvylshikimate-3-phosphate (EPSP) to yield chorismate, which is the branch point compound that serves as the starting substrate for the three terminal pathways of aromatic amino acid biosynthesis. This reaction introduces a second double bond into the aromatic ring system. This chain is Chorismate synthase, found in Buchnera aphidicola subsp. Acyrthosiphon pisum (strain 5A).